The primary structure comprises 65 residues: DNA gyrase inhibitor YacG (65 aa).

Residues C9, C12, C28, and C32 each coordinate Zn(2+). Residues 45 to 65 are disordered; sequence KRIPSSGDLSESDDWSEEPKQ. Positions 54–65 are enriched in acidic residues; the sequence is SESDDWSEEPKQ.

This sequence belongs to the DNA gyrase inhibitor YacG family. In terms of assembly, interacts with GyrB. Zn(2+) serves as cofactor.

In terms of biological role, inhibits all the catalytic activities of DNA gyrase by preventing its interaction with DNA. Acts by binding directly to the C-terminal domain of GyrB, which probably disrupts DNA binding by the gyrase. The chain is DNA gyrase inhibitor YacG from Shigella boydii serotype 18 (strain CDC 3083-94 / BS512).